Reading from the N-terminus, the 786-residue chain is Cyclin-F (786 aa).

The Nuclear localization signal 1 signature appears at 20–28; the sequence is KRRIRRRPR. The F-box domain maps to 29-76; it reads NLTILSLPEDVLFHILKWLSVEDILAVRAVHSQLKDLVDNHASVWACA. The Cyclin N-terminal domain maps to 288–405; the sequence is QASQAVSKQQ…EIVSALEGKI (118 aa). 4 consecutive short sequence motifs (d box) follow at residues 310–313, 343–346, 349–352, and 351–354; these read RYIL, RRRL, RYRL, and RLQL. 2 disordered regions span residues 564-593 and 675-738; these read SPSGRRTKRKRENSLQEDRGSFVTTPTAEL and TQIP…HTQP. The Nuclear localization signal 2 motif lies at 568–574; it reads RRTKRKR. The interval 582–766 is PEST; the sequence is RGSFVTTPTA…ESSVPQQQVK (185 aa). Residues 697–714 are compositionally biased toward low complexity; that stretch reads VTTSGYSSVSTASPTSSV. A compositionally biased stretch (polar residues) spans 723 to 738; the sequence is QPTSVLSLDSDSHTQP. The D box 5 signature appears at 767 to 770; that stretch reads RINL.

The protein belongs to the cyclin family. Cyclin AB subfamily. Component of the SCF(CCNF) complex consisting of CUL1, RBX1, SKP1 and CCNF. Interacts with SKP1. Interacts with CUL1. Interacts with CCNB1; interaction is required for nuclear localization of CCNB1. Interacts with CCP110; this interaction leads to CCP110 ubiquitination and degradation via the proteasome pathway. Interacts (via the Cyclin N-terminal domain) with MYBL2/BMYB. Interacts with FZR1/CDH1 (via N-terminus). Interacts with RRM2 (via Cy motif and when phosphorylated at 'Thr-33'); the interaction occurs exclusively in G2 and early M. Interacts with CDC6 (via Cy motif); the interaction takes place during G2 and M phase. Post-translationally, degraded when the spindle assembly checkpoint is activated during the G2-M transition. Degradation depends on the C-terminal PEST sequence. Phosphorylated just before cells enter into mitosis. In terms of processing, ubiquitinated by the anaphase-promoting complex (APC/C); leading to its degradation by the proteasome. As to expression, widely expressed, with expression detected in the heart, brain, placenta, lung, liver, skeletal muscle, kidney and pancreas.

The protein localises to the nucleus. It is found in the cytoplasm. It localises to the perinuclear region. The protein resides in the cytoskeleton. Its subcellular location is the microtubule organizing center. The protein localises to the centrosome. It is found in the centriole. Functionally, substrate recognition component of a SCF (SKP1-CUL1-F-box protein) E3 ubiquitin-protein ligase complex which mediates the ubiquitination and subsequent proteasomal degradation of target proteins. The SCF(CCNF) E3 ubiquitin-protein ligase complex is an integral component of the ubiquitin proteasome system (UPS) and links proteasome degradation to the cell cycle. Mediates the substrate recognition and the proteasomal degradation of various target proteins involved in the regulation of cell cycle progression and in the maintenance of genome stability. Mediates the ubiquitination and proteasomal degradation of CP110 during G2 phase, thereby acting as an inhibitor of centrosome reduplication. In G2, mediates the ubiquitination and subsequent degradation of ribonucleotide reductase RRM2, thereby maintaining a balanced pool of dNTPs and genome integrity. In G2, mediates the ubiquitination and proteasomal degradation of CDC6, thereby suppressing DNA re-replication and preventing genome instability. Involved in the ubiquitination and degradation of the substrate adapter CDH1 of the anaphase-promoting complex (APC/C), thereby acting as an antagonist of APC/C in regulating G1 progression and S phase entry. May play a role in the G2 cell cycle checkpoint control after DNA damage, possibly by promoting the ubiquitination of MYBL2/BMYB. This chain is Cyclin-F (CCNF), found in Homo sapiens (Human).